The sequence spans 84 residues: Small ribosomal subunit protein uS17 (84 aa).

It belongs to the universal ribosomal protein uS17 family. As to quaternary structure, part of the 30S ribosomal subunit.

Its function is as follows. One of the primary rRNA binding proteins, it binds specifically to the 5'-end of 16S ribosomal RNA. The sequence is that of Small ribosomal subunit protein uS17 from Aliivibrio salmonicida (strain LFI1238) (Vibrio salmonicida (strain LFI1238)).